The chain runs to 308 residues: MVPMASNNLAYIKLRLLSLLVGLGIAALASLIIYAVAYYLFGIYSIGIIFGVFVLVLMMDLLQWFIGPYIVDMVYRAKKADPNRYGNIIAIVEEVAKLNGIRPPTLYISEVSFPNAFAYESPIAGRRIAITRPLLGILNEDELRAVIGHEIGHLKHHDSAVIMAIGLIPTLIFYFAYTTLFAGDRRNGGSAIILALVLMVVSFLFNIMVLSVNRLRESYADANAALTIPNGARNLQTALAKIVRYGSSAKNTAASMLLFANYDMDREDVETLIDKWRTMRVGILSDLFSDHPHPAKRIRLLDKLQDSS.

2 consecutive transmembrane segments (helical) span residues leucine 16–valine 36 and tyrosine 39–methionine 59. Residue histidine 149 participates in Zn(2+) binding. Glutamate 150 is an active-site residue. Zn(2+) is bound at residue histidine 153. A run of 2 helical transmembrane segments spans residues valine 161 to phenylalanine 181 and isoleucine 192 to valine 212. A Zn(2+)-binding site is contributed by glutamate 217.

Belongs to the peptidase M48B family. It depends on Zn(2+) as a cofactor.

Its subcellular location is the cell membrane. In Thermoplasma volcanium (strain ATCC 51530 / DSM 4299 / JCM 9571 / NBRC 15438 / GSS1), this protein is Protease HtpX homolog.